The following is a 452-amino-acid chain: Phosphoglucosamine mutase (452 aa).

S108 (phosphoserine intermediate) is an active-site residue. Mg(2+) contacts are provided by S108, D247, D249, and D251. The residue at position 108 (S108) is a Phosphoserine.

The protein belongs to the phosphohexose mutase family. Mg(2+) is required as a cofactor. Activated by phosphorylation.

It carries out the reaction alpha-D-glucosamine 1-phosphate = D-glucosamine 6-phosphate. In terms of biological role, catalyzes the conversion of glucosamine-6-phosphate to glucosamine-1-phosphate. This Burkholderia thailandensis (strain ATCC 700388 / DSM 13276 / CCUG 48851 / CIP 106301 / E264) protein is Phosphoglucosamine mutase.